A 412-amino-acid chain; its full sequence is Imidazolonepropionase (412 aa).

Residues histidine 76 and histidine 78 each contribute to the Fe(3+) site. Residues histidine 76 and histidine 78 each contribute to the Zn(2+) site. Arginine 85, tyrosine 148, and histidine 181 together coordinate 4-imidazolone-5-propanoate. Residue tyrosine 148 participates in N-formimidoyl-L-glutamate binding. Histidine 242 is a Fe(3+) binding site. Residue histidine 242 participates in Zn(2+) binding. Glutamate 245 provides a ligand contact to 4-imidazolone-5-propanoate. Aspartate 317 serves as a coordination point for Fe(3+). Aspartate 317 contributes to the Zn(2+) binding site. Residues asparagine 319 and glycine 321 each coordinate N-formimidoyl-L-glutamate. Serine 322 is a binding site for 4-imidazolone-5-propanoate.

Belongs to the metallo-dependent hydrolases superfamily. HutI family. Requires Zn(2+) as cofactor. It depends on Fe(3+) as a cofactor.

It localises to the cytoplasm. It carries out the reaction 4-imidazolone-5-propanoate + H2O = N-formimidoyl-L-glutamate. It participates in amino-acid degradation; L-histidine degradation into L-glutamate; N-formimidoyl-L-glutamate from L-histidine: step 3/3. In terms of biological role, catalyzes the hydrolytic cleavage of the carbon-nitrogen bond in imidazolone-5-propanoate to yield N-formimidoyl-L-glutamate. It is the third step in the universal histidine degradation pathway. The sequence is that of Imidazolonepropionase from Staphylococcus aureus (strain USA300 / TCH1516).